The following is a 318-amino-acid chain: Non-homologous end joining protein Ku (318 aa).

Residues 10–193 form the Ku domain; sequence AFGLVNVPVK…EVQIKPAELK (184 aa). The segment at 259–318 is disordered; sequence SVKARKGGKSDSKDDSDSESDSKESKSDSKPAKKAPAKKAAAKKSTAKKAPAKKAAAKKS. A compositionally biased stretch (basic and acidic residues) spans 266 to 289; that stretch reads GKSDSKDDSDSESDSKESKSDSKP. Residues 290–318 are compositionally biased toward basic residues; sequence AKKAPAKKAAAKKSTAKKAPAKKAAAKKS.

This sequence belongs to the prokaryotic Ku family. As to quaternary structure, homodimer. Interacts with Sir2 and probably also with LigD; may form a trimeric complex during NHEJ.

With LigD forms a non-homologous end joining (NHEJ) repair enzyme which repairs blunt-end and 5'-overhang double strand breaks (DSB) with about 50% fidelity, and DSB with non-complementary 3' ends. Plays a partial role in NHEJ on 3'-overhang repair of complementary ends. NHEJ repairs DSB with blunt ends and 5' overhangs with a high level of nucleotide insertion/deletion, without a need for microhomology. This protein but not LigD also suppresses homologous recombination. Overexpression dramatically increases the efficiency of NHEJ with no effect on repair fidelity. The polypeptide is Non-homologous end joining protein Ku (Mycolicibacterium smegmatis (strain ATCC 700084 / mc(2)155) (Mycobacterium smegmatis)).